The sequence spans 574 residues: Phosphatidylinositol 4-kinase gamma 3 (574 aa).

2 consecutive Ubiquitin-like domains span residues P32–Q109 and A110–R188. Residues G257 to E555 enclose the PI3K/PI4K catalytic domain. The interval S263–G269 is G-loop. ATP-binding positions include S264–A270, K286, and Q381–V384. Residues A414–N422 are catalytic loop. An activation loop region spans residues P438 to E464. D440 provides a ligand contact to ATP.

Belongs to the PI3/PI4-kinase family. Type II PI4K subfamily.

The enzyme catalyses a 1,2-diacyl-sn-glycero-3-phospho-(1D-myo-inositol) + ATP = a 1,2-diacyl-sn-glycero-3-phospho-(1D-myo-inositol 4-phosphate) + ADP + H(+). Its function is as follows. The phosphorylation of phosphatidylinositol (PI) to PI4P is the first committed step in the generation of phosphatidylinositol 4,5-bisphosphate (PIP2), a precursor of the second messenger inositol 1,4,5-trisphosphate (InsP3). In Arabidopsis thaliana (Mouse-ear cress), this protein is Phosphatidylinositol 4-kinase gamma 3 (PI4KG3).